A 94-amino-acid chain; its full sequence is Endoribonuclease VapD 2 (94 aa).

It belongs to the VapD ribonuclease family. As to quaternary structure, homodimer.

In terms of biological role, cleaves ssRNA, mostly between U:A. The chain is Endoribonuclease VapD 2 from Riemerella anatipestifer (Moraxella anatipestifer).